The chain runs to 197 residues: dITP/XTP pyrophosphatase (197 aa).

7 to 12 (TGNEQK) is a substrate binding site. E44 and D73 together coordinate Mg(2+). D73 acts as the Proton acceptor in catalysis. Residues T74, 156–159 (FGYD), K179, and 184–185 (HR) contribute to the substrate site.

This sequence belongs to the HAM1 NTPase family. As to quaternary structure, homodimer. It depends on Mg(2+) as a cofactor.

It carries out the reaction XTP + H2O = XMP + diphosphate + H(+). The enzyme catalyses dITP + H2O = dIMP + diphosphate + H(+). It catalyses the reaction ITP + H2O = IMP + diphosphate + H(+). In terms of biological role, pyrophosphatase that catalyzes the hydrolysis of nucleoside triphosphates to their monophosphate derivatives, with a high preference for the non-canonical purine nucleotides XTP (xanthosine triphosphate), dITP (deoxyinosine triphosphate) and ITP. Seems to function as a house-cleaning enzyme that removes non-canonical purine nucleotides from the nucleotide pool, thus preventing their incorporation into DNA/RNA and avoiding chromosomal lesions. In Elusimicrobium minutum (strain Pei191), this protein is dITP/XTP pyrophosphatase.